The sequence spans 223 residues: Mediator of RNA polymerase II transcription subunit 8 (223 aa).

The interval 2–138 is interaction with TBP1; that stretch reads SQSTASLVPE…VRETSGVTTA (137 aa). A coiled-coil region spans residues 33 to 59; it reads LDAVRMRLAQLTHSLRRIRDEMSKAEL.

It belongs to the Mediator complex subunit 8 family. Component of the Mediator complex, which is composed of at least 21 subunits that form three structurally distinct submodules. The Mediator head module contains MED6, MED8, MED11, SRB4/MED17, SRB5/MED18, ROX3/MED19, SRB2/MED20 and SRB6/MED22, the middle module contains MED1, MED4, NUT1/MED5, MED7, CSE2/MED9, NUT2/MED10, SRB7/MED21 and SOH1/MED31, and the tail module contains MED2, PGD1/MED3, RGR1/MED14, GAL11/MED15 and SIN4/MED16. The head and the middle modules interact directly with RNA polymerase II, whereas the elongated tail module interacts with gene-specific regulatory proteins. MED8 interacts directly with SRB5/MED18. Also interacts with Hexokinase B (HXK2). Interacts with TBP1.

The protein localises to the nucleus. Functionally, component of the Mediator complex, a coactivator involved in the regulated transcription of nearly all RNA polymerase II-dependent genes. Mediator functions as a bridge to convey information from gene-specific regulatory proteins to the basal RNA polymerase II transcription machinery. The Mediator complex, having a compact conformation in its free form, is recruited to promoters by direct interactions with regulatory proteins and serves for the assembly of a functional preinitiation complex with RNA polymerase II and the general transcription factors. The Mediator complex unfolds to an extended conformation and partially surrounds RNA polymerase II, specifically interacting with the unphosphorylated form of the C-terminal domain (CTD) of RNA polymerase II. The Mediator complex dissociates from the RNA polymerase II holoenzyme and stays at the promoter when transcriptional elongation begins. MED8 binds to the consensus sequence 5'-[AC][AG]GAAAT-3' in both the UAS of SUC2 and the DRS2 of HXK2. The sequence is that of Mediator of RNA polymerase II transcription subunit 8 (MED8) from Saccharomyces cerevisiae (strain ATCC 204508 / S288c) (Baker's yeast).